The following is a 179-amino-acid chain: Peptide deformylase (179 aa).

Residues Cys103 and His145 each coordinate Fe cation. Residue Glu146 is part of the active site. His149 is a binding site for Fe cation.

The protein belongs to the polypeptide deformylase family. It depends on Fe(2+) as a cofactor.

The enzyme catalyses N-terminal N-formyl-L-methionyl-[peptide] + H2O = N-terminal L-methionyl-[peptide] + formate. In terms of biological role, removes the formyl group from the N-terminal Met of newly synthesized proteins. Requires at least a dipeptide for an efficient rate of reaction. N-terminal L-methionine is a prerequisite for activity but the enzyme has broad specificity at other positions. The polypeptide is Peptide deformylase (Leptospira biflexa serovar Patoc (strain Patoc 1 / Ames)).